Here is a 208-residue protein sequence, read N- to C-terminus: UPF0319 protein VSAL_I2129 (208 aa).

The first 21 residues, 1-21 (MKFHSFLAAGLCLLTSLSASA), serve as a signal peptide directing secretion.

The protein belongs to the UPF0319 family.

The protein is UPF0319 protein VSAL_I2129 of Aliivibrio salmonicida (strain LFI1238) (Vibrio salmonicida (strain LFI1238)).